The primary structure comprises 220 residues: Putative DNA repair glycosylase MJ1434 (220 aa).

4 residues coordinate [4Fe-4S] cluster: Cys202, Cys208, Cys211, and Cys217.

It belongs to the Nth/MutY family. The cofactor is [4Fe-4S] cluster.

The chain is Putative DNA repair glycosylase MJ1434 from Methanocaldococcus jannaschii (strain ATCC 43067 / DSM 2661 / JAL-1 / JCM 10045 / NBRC 100440) (Methanococcus jannaschii).